The following is a 113-amino-acid chain: UPF0251 protein Teth514_1147 (113 aa).

The protein belongs to the UPF0251 family.

This Thermoanaerobacter sp. (strain X514) protein is UPF0251 protein Teth514_1147.